The following is a 261-amino-acid chain: Protein OSB1, mitochondrial (261 aa).

A mitochondrion-targeting transit peptide spans 1–28 (MNTFFKLGSLIQRTASQISSSFPKSRFF). The SSB domain maps to 55–155 (VNSVSLMGFV…VKVAEVNYVA (101 aa)). Residues 189–238 (WQVFFSNPYDWWDNRRNKKNPKQPDFKHKDTGEALWLCSDLPDWITRRLE) are PDF region.

As to expression, expressed in root elongation zone and in gametophytic cells.

The protein resides in the mitochondrion. Regulates mitochondrial DNA recombination. Represses homologous recombination, preventing mitochondrial genome instability and unbalanced transmission of alternative mtDNA configurations. Binds preferentially single-stranded DNA. Does not bind to RNA. This is Protein OSB1, mitochondrial (OSB1) from Arabidopsis thaliana (Mouse-ear cress).